A 410-amino-acid polypeptide reads, in one-letter code: Diguanylate cyclase DgcM (410 aa).

PAS domains follow at residues 3 to 70 (THNF…NQHD) and 129 to 198 (GFYA…HLPG). The PAC domain maps to 199-251 (GHKPLNFVHKLADGSTRHVQTYAGPIEIYGDKLMLCIVHDITEQKRLEEQLEH). One can recognise a GGDEF domain in the interval 283-410 (QDYSLLLIDT…NDGRNRVLAA (128 aa)). Asp291 is a Mg(2+) binding site. Residues Asn299, His304, and Asp308 each coordinate substrate. Position 334 (Glu334) interacts with Mg(2+). Glu334 functions as the Proton acceptor in the catalytic mechanism.

In terms of assembly, forms homodimers and homotetramers. Interacts with PdeR and MlrA. Mg(2+) serves as cofactor.

The enzyme catalyses 2 GTP = 3',3'-c-di-GMP + 2 diphosphate. Its pathway is purine metabolism; 3',5'-cyclic di-GMP biosynthesis. Activity is inhibited by the phosphodiesterase PdeR. Inhibition is relieved by high cellular c-di-GMP levels. In terms of biological role, part of a signaling cascade that regulates curli biosynthesis. The cascade is composed of two cyclic-di-GMP (c-di-GMP) control modules, in which c-di-GMP controlled by the DgcE/PdeH pair (module I) regulates the activity of the DgcM/PdeR pair (module II), which in turn regulates activity of the transcription factor MlrA and expression of the master biofilm regulator csgD. DgcM stimulates activity of MlrA by direct interaction, leading to the transcription of csgD. It also catalyzes the synthesis of c-di-GMP via the condensation of 2 GTP molecules, which contributes to the c-di-GMP pool generated by module I in a positive feedback loop. Production of c-di-GMP contributes to but is not essential for MlrA activation. The sequence is that of Diguanylate cyclase DgcM from Escherichia coli (strain K12).